Consider the following 455-residue polypeptide: Phosphoglucosamine mutase (455 aa).

S102 acts as the Phosphoserine intermediate in catalysis. Mg(2+) contacts are provided by S102, D241, D243, and D245. S102 bears the Phosphoserine mark.

It belongs to the phosphohexose mutase family. Mg(2+) serves as cofactor. Post-translationally, activated by phosphorylation.

The enzyme catalyses alpha-D-glucosamine 1-phosphate = D-glucosamine 6-phosphate. Its function is as follows. Catalyzes the conversion of glucosamine-6-phosphate to glucosamine-1-phosphate. This is Phosphoglucosamine mutase from Legionella pneumophila (strain Paris).